The sequence spans 176 residues: Acireductone dioxygenase (176 aa).

Fe(2+)-binding residues include His91, His93, Glu97, and His136. Ni(2+)-binding residues include His91, His93, Glu97, and His136.

The protein belongs to the acireductone dioxygenase (ARD) family. In terms of assembly, monomer. Fe(2+) is required as a cofactor. Requires Ni(2+) as cofactor.

It catalyses the reaction 1,2-dihydroxy-5-(methylsulfanyl)pent-1-en-3-one + O2 = 3-(methylsulfanyl)propanoate + CO + formate + 2 H(+). The enzyme catalyses 1,2-dihydroxy-5-(methylsulfanyl)pent-1-en-3-one + O2 = 4-methylsulfanyl-2-oxobutanoate + formate + 2 H(+). It participates in amino-acid biosynthesis; L-methionine biosynthesis via salvage pathway; L-methionine from S-methyl-5-thio-alpha-D-ribose 1-phosphate: step 5/6. In terms of biological role, catalyzes 2 different reactions between oxygen and the acireductone 1,2-dihydroxy-3-keto-5-methylthiopentene (DHK-MTPene) depending upon the metal bound in the active site. Fe-containing acireductone dioxygenase (Fe-ARD) produces formate and 2-keto-4-methylthiobutyrate (KMTB), the alpha-ketoacid precursor of methionine in the methionine recycle pathway. Ni-containing acireductone dioxygenase (Ni-ARD) produces methylthiopropionate, carbon monoxide and formate, and does not lie on the methionine recycle pathway. The sequence is that of Acireductone dioxygenase from Picosynechococcus sp. (strain ATCC 27264 / PCC 7002 / PR-6) (Agmenellum quadruplicatum).